The primary structure comprises 357 residues: Histidinol-phosphate aminotransferase (357 aa).

Residue Lys-212 is modified to N6-(pyridoxal phosphate)lysine.

It belongs to the class-II pyridoxal-phosphate-dependent aminotransferase family. Histidinol-phosphate aminotransferase subfamily. In terms of assembly, homodimer. Pyridoxal 5'-phosphate is required as a cofactor.

It carries out the reaction L-histidinol phosphate + 2-oxoglutarate = 3-(imidazol-4-yl)-2-oxopropyl phosphate + L-glutamate. The protein operates within amino-acid biosynthesis; L-histidine biosynthesis; L-histidine from 5-phospho-alpha-D-ribose 1-diphosphate: step 7/9. The sequence is that of Histidinol-phosphate aminotransferase from Pectobacterium carotovorum subsp. carotovorum (strain PC1).